The chain runs to 180 residues: 6,7-dimethyl-8-ribityllumazine synthase (180 aa).

5-amino-6-(D-ribitylamino)uracil-binding positions include phenylalanine 23, 61 to 63 (SFE), and 85 to 87 (AVI). Residue 90-91 (QT) coordinates (2S)-2-hydroxy-3-oxobutyl phosphate. Histidine 93 functions as the Proton donor in the catalytic mechanism. 5-amino-6-(D-ribitylamino)uracil is bound at residue phenylalanine 118. Arginine 132 contacts (2S)-2-hydroxy-3-oxobutyl phosphate.

This sequence belongs to the DMRL synthase family.

The catalysed reaction is (2S)-2-hydroxy-3-oxobutyl phosphate + 5-amino-6-(D-ribitylamino)uracil = 6,7-dimethyl-8-(1-D-ribityl)lumazine + phosphate + 2 H2O + H(+). It participates in cofactor biosynthesis; riboflavin biosynthesis; riboflavin from 2-hydroxy-3-oxobutyl phosphate and 5-amino-6-(D-ribitylamino)uracil: step 1/2. Its function is as follows. Catalyzes the formation of 6,7-dimethyl-8-ribityllumazine by condensation of 5-amino-6-(D-ribitylamino)uracil with 3,4-dihydroxy-2-butanone 4-phosphate. This is the penultimate step in the biosynthesis of riboflavin. The sequence is that of 6,7-dimethyl-8-ribityllumazine synthase from Gloeobacter violaceus (strain ATCC 29082 / PCC 7421).